Here is a 380-residue protein sequence, read N- to C-terminus: Queuine tRNA-ribosyltransferase (380 aa).

Asp-96 functions as the Proton acceptor in the catalytic mechanism. Residues 96 to 100, Asp-150, Gln-193, and Gly-220 each bind substrate; that span reads DSGGF. The interval 251-257 is RNA binding; it reads GVGAPDS. The Nucleophile role is filled by Asp-270. The RNA binding; important for wobble base 34 recognition stretch occupies residues 275–279; it reads TRIAR. 4 residues coordinate Zn(2+): Cys-308, Cys-310, Cys-313, and His-339.

The protein belongs to the queuine tRNA-ribosyltransferase family. In terms of assembly, homodimer. Within each dimer, one monomer is responsible for RNA recognition and catalysis, while the other monomer binds to the replacement base PreQ1. Requires Zn(2+) as cofactor.

The enzyme catalyses 7-aminomethyl-7-carbaguanine + guanosine(34) in tRNA = 7-aminomethyl-7-carbaguanosine(34) in tRNA + guanine. It participates in tRNA modification; tRNA-queuosine biosynthesis. Catalyzes the base-exchange of a guanine (G) residue with the queuine precursor 7-aminomethyl-7-deazaguanine (PreQ1) at position 34 (anticodon wobble position) in tRNAs with GU(N) anticodons (tRNA-Asp, -Asn, -His and -Tyr). Catalysis occurs through a double-displacement mechanism. The nucleophile active site attacks the C1' of nucleotide 34 to detach the guanine base from the RNA, forming a covalent enzyme-RNA intermediate. The proton acceptor active site deprotonates the incoming PreQ1, allowing a nucleophilic attack on the C1' of the ribose to form the product. After dissociation, two additional enzymatic reactions on the tRNA convert PreQ1 to queuine (Q), resulting in the hypermodified nucleoside queuosine (7-(((4,5-cis-dihydroxy-2-cyclopenten-1-yl)amino)methyl)-7-deazaguanosine). This Streptococcus pneumoniae (strain Taiwan19F-14) protein is Queuine tRNA-ribosyltransferase.